A 601-amino-acid polypeptide reads, in one-letter code: ATP-dependent RNA helicase DDX55 (601 aa).

The Q motif motif lies at 9–37; the sequence is WESLPVPLHPKVLSVLRELGFPYMTPVQS. A Helicase ATP-binding domain is found at 40–223; the sequence is IPLFMKNKDV…RAGLRNPVRI (184 aa). 53–60 contacts ATP; that stretch reads AVTGSGKT. The DEAD box motif lies at 171–174; sequence DEAD. Positions 254-402 constitute a Helicase C-terminal domain; sequence KFNQLVHFLR…EMKLQKNTAD (149 aa). A compositionally biased stretch (basic and acidic residues) spans 502–514; sequence QQRKEKTENDGRR. Disordered stretches follow at residues 502–553 and 576–601; these read QQRK…EDME and EKGL…EDDC. The span at 515-538 shows a compositional bias: basic residues; it reads KFIKNKAWSKQKAKKEKKKKLTEK. The interval 534-563 is important for nuclear localization; that stretch reads KLTEKRKREEGSDVEDEDMEELLNDTRLLK. Phosphoserine occurs at positions 545 and 595.

Belongs to the DEAD box helicase family. DDX55/SPB4 subfamily. In terms of assembly, interacts with 28S rRNA. Interacts with double-stranded RNA substrates in vitro; the interaction stimulates ATPase activity.

The protein resides in the nucleus. It localises to the nucleoplasm. It catalyses the reaction ATP + H2O = ADP + phosphate + H(+). Its function is as follows. Probable ATP-binding RNA helicase. Has ATPase activity and is involved in the maturation of precursor large subunit rRNAs. This Bos taurus (Bovine) protein is ATP-dependent RNA helicase DDX55 (DDX55).